Reading from the N-terminus, the 316-residue chain is Transaldolase (316 aa).

The active-site Schiff-base intermediate with substrate is K131.

This sequence belongs to the transaldolase family. Type 1 subfamily. Homodimer.

It localises to the cytoplasm. The catalysed reaction is D-sedoheptulose 7-phosphate + D-glyceraldehyde 3-phosphate = D-erythrose 4-phosphate + beta-D-fructose 6-phosphate. The protein operates within carbohydrate degradation; pentose phosphate pathway; D-glyceraldehyde 3-phosphate and beta-D-fructose 6-phosphate from D-ribose 5-phosphate and D-xylulose 5-phosphate (non-oxidative stage): step 2/3. Functionally, transaldolase is important for the balance of metabolites in the pentose-phosphate pathway. In Sodalis glossinidius (strain morsitans), this protein is Transaldolase.